A 91-amino-acid polypeptide reads, in one-letter code: Small ribosomal subunit protein uS19 (91 aa).

Belongs to the universal ribosomal protein uS19 family.

Functionally, protein S19 forms a complex with S13 that binds strongly to the 16S ribosomal RNA. The protein is Small ribosomal subunit protein uS19 of Fusobacterium nucleatum subsp. nucleatum (strain ATCC 25586 / DSM 15643 / BCRC 10681 / CIP 101130 / JCM 8532 / KCTC 2640 / LMG 13131 / VPI 4355).